Consider the following 544-residue polypeptide: ATP synthase subunit alpha (544 aa).

173–180 serves as a coordination point for ATP; sequence GDRQTGKT. The interval 513 to 544 is disordered; sequence GSDGQIIGGGEPESDGEDVDVEQEQIVRQKRG. Positions 524 to 535 are enriched in acidic residues; sequence PESDGEDVDVEQ.

This sequence belongs to the ATPase alpha/beta chains family. F-type ATPases have 2 components, CF(1) - the catalytic core - and CF(0) - the membrane proton channel. CF(1) has five subunits: alpha(3), beta(3), gamma(1), delta(1), epsilon(1). CF(0) has three main subunits: a(1), b(2) and c(9-12). The alpha and beta chains form an alternating ring which encloses part of the gamma chain. CF(1) is attached to CF(0) by a central stalk formed by the gamma and epsilon chains, while a peripheral stalk is formed by the delta and b chains.

The protein resides in the cell membrane. The enzyme catalyses ATP + H2O + 4 H(+)(in) = ADP + phosphate + 5 H(+)(out). In terms of biological role, produces ATP from ADP in the presence of a proton gradient across the membrane. The alpha chain is a regulatory subunit. This Beutenbergia cavernae (strain ATCC BAA-8 / DSM 12333 / CCUG 43141 / JCM 11478 / NBRC 16432 / NCIMB 13614 / HKI 0122) protein is ATP synthase subunit alpha.